Consider the following 852-residue polypeptide: Lon protease homolog 2, peroxisomal (852 aa).

S2 is modified (N-acetylserine). The 210-residue stretch at 13–222 folds into the Lon N-terminal domain; it reads LPLLLTHESV…MTIPLLVRQI (210 aa). An ATP-binding site is contributed by 375 to 382; sequence GPPGVGKT. One can recognise a Lon proteolytic domain in the interval 651–837; sequence LSQPGVAIGL…DEVLNAAFDG (187 aa). Residues S743 and K786 contribute to the active site. The short motif at 850 to 852 is the Microbody targeting signal element; the sequence is SKL.

This sequence belongs to the peptidase S16 family. In terms of assembly, interacts with PEX5. Interacts with TYSND1. May interact with enzymes involved in beta-oxidation of fatty acids, including ACOX1/AOX.

It is found in the peroxisome matrix. It carries out the reaction Hydrolysis of proteins in presence of ATP.. Functionally, ATP-dependent serine protease that mediates the selective degradation of misfolded and unassembled polypeptides in the peroxisomal matrix. Necessary for type 2 peroxisome targeting signal (PTS2)-containing protein processing and facilitates peroxisome matrix protein import. May indirectly regulate peroxisomal fatty acid beta-oxidation through degradation of the self-processed forms of TYSND1. The protein is Lon protease homolog 2, peroxisomal (Lonp2) of Mus musculus (Mouse).